We begin with the raw amino-acid sequence, 972 residues long: Serine/threonine-protein kinase ATG1 (972 aa).

The region spanning 18 to 319 (YVVEKEIGRG…FTEFFSNGLV (302 aa)) is the Protein kinase domain. ATP contacts are provided by residues 24–32 (IGRGSFAVV) and Lys-48. Asp-166 acts as the Proton acceptor in catalysis. 5 disordered regions span residues 359–394 (KRAS…QSDQ), 424–444 (YNNQ…SNGR), 467–506 (ALQS…HRTT), 562–605 (ASQA…SRRP), and 743–764 (DDEE…NSSG). Residues 424 to 436 (YNNQEERSNEERQ) show a composition bias toward basic and acidic residues. Polar residues predominate over residues 562–584 (ASQALQMARHSSTSVSAANTAKQ). The segment covering 585–605 (TLLRRNSRTLSSSGASTSRRP) has biased composition (low complexity). Residues 750–759 (EHSPGAETYR) are compositionally biased toward basic and acidic residues.

The protein belongs to the protein kinase superfamily. Ser/Thr protein kinase family. APG1/unc-51/ULK1 subfamily. As to quaternary structure, homodimer. Forms a ternary complex with ATG13 and ATG17.

The protein localises to the cytoplasm. It is found in the preautophagosomal structure membrane. It catalyses the reaction L-seryl-[protein] + ATP = O-phospho-L-seryl-[protein] + ADP + H(+). The enzyme catalyses L-threonyl-[protein] + ATP = O-phospho-L-threonyl-[protein] + ADP + H(+). Its function is as follows. Serine/threonine protein kinase involved in the cytoplasm to vacuole transport (Cvt) and found to be essential in autophagy, where it is required for the formation of autophagosomes. Involved in the clearance of protein aggregates which cannot be efficiently cleared by the proteasome. Required for selective autophagic degradation of the nucleus (nucleophagy) as well as for mitophagy which contributes to regulate mitochondrial quantity and quality by eliminating the mitochondria to a basal level to fulfill cellular energy requirements and preventing excess ROS production. Also involved in endoplasmic reticulum-specific autophagic process, in selective removal of ER-associated degradation (ERAD) substrates. Plays a key role in ATG9 and ATG23 cycling through the pre-autophagosomal structure and is necessary to promote ATG18 binding to ATG9 through phosphorylation of ATG9. Catalyzes phosphorylation of ATG4, decreasing the interaction between ATG4 and ATG8 and impairing deconjugation of PE-conjugated forms of ATG8. This is Serine/threonine-protein kinase ATG1 from Eremothecium gossypii (strain ATCC 10895 / CBS 109.51 / FGSC 9923 / NRRL Y-1056) (Yeast).